The following is a 494-amino-acid chain: MMMTKQKSTLTERLNIGGDEVRELKLGATFNPKNTSTAFHTIKYDFKPASVDTSRMATVDVGSNNQVTVTVPNLESSGVPQTVYKGNHKKYTKECLIIFDKETGAITLERLNHNIQVKKTRSEVTNKPSLMSATNAPMSNGAPVPSSAAAGTGSAGKLENSTMRISSKTKVSTGSRRNNIIDFKPRNSPMQQSSPSRPVASHRSPQSAPAWHANNAQQTLPSIPMIMDDDDFGLSAALHNGSQANISGSSTGSSAGQPDYASVHSGKQRQATPQGHAKRQQLTQRSSPPMQQQQHQNYGRGSNNYAQQQQQQQQQQLQQRASFSHSNHSNSMPMDMDSPTHNEQTAQSMAQAAAALEQQIGGELSASSSSSESDSSDSDSGSDSDDSTEDDRPNHHTNQQLPPAQQPQHHHMQHQQQQHMHQLPNLELGSVSPAYNSHHHHQQQQQSHHHHHHQQQQQQQHQQSGIYASNGGFPNDLLQNDLQLSSNSSDDDDD.

Over residues 119–138 (KTRSEVTNKPSLMSATNAPM) the composition is skewed to polar residues. Disordered stretches follow at residues 119 to 212 (KTRS…PAWH) and 243 to 494 (QANI…DDDD). Low complexity predominate over residues 139–156 (SNGAPVPSSAAAGTGSAG). Residues 159–178 (ENSTMRISSKTKVSTGSRRN) show a composition bias toward polar residues. Residue Ser-188 is modified to Phosphoserine. 2 stretches are compositionally biased toward polar residues: residues 243-256 (QANI…SSAG) and 280-306 (QQLT…NNYA). Over residues 307–319 (QQQQQQQQQQLQQ) the composition is skewed to low complexity. A compositionally biased stretch (polar residues) spans 320-332 (RASFSHSNHSNSM). Residues 344–373 (QTAQSMAQAAAALEQQIGGELSASSSSSES) are compositionally biased toward low complexity. A compositionally biased stretch (acidic residues) spans 374–389 (DSSDSDSGSDSDDSTE). Residues 414–424 (HQQQQHMHQLP) are compositionally biased toward low complexity. Basic residues predominate over residues 437–454 (SHHHHQQQQQSHHHHHHQ). 2 stretches are compositionally biased toward low complexity: residues 455–464 (QQQQQQHQQS) and 475–488 (NDLL…SSNS).

It belongs to the EAF family.

It is found in the nucleus. Promotes transcriptional elongation by Su(Tpl)/ELL. Essential for development. The polypeptide is Ell-associated factor Eaf (Drosophila virilis (Fruit fly)).